The chain runs to 216 residues: LexA repressor 1 (216 aa).

Positions 38–58 (TRQIGAAVGLRSMSSVARHLR) form a DNA-binding region, H-T-H motif. Active-site for autocatalytic cleavage activity residues include S140 and K177.

The protein belongs to the peptidase S24 family. In terms of assembly, homodimer.

The enzyme catalyses Hydrolysis of Ala-|-Gly bond in repressor LexA.. Its function is as follows. Represses a number of genes involved in the response to DNA damage (SOS response), including recA and lexA. In the presence of single-stranded DNA, RecA interacts with LexA causing an autocatalytic cleavage which disrupts the DNA-binding part of LexA, leading to derepression of the SOS regulon and eventually DNA repair. The sequence is that of LexA repressor 1 from Nocardia farcinica (strain IFM 10152).